The primary structure comprises 378 residues: Alanine racemase (378 aa).

Lysine 35 serves as the catalytic Proton acceptor; specific for D-alanine. Lysine 35 is subject to N6-(pyridoxal phosphate)lysine. Arginine 133 serves as a coordination point for substrate. Catalysis depends on tyrosine 266, which acts as the Proton acceptor; specific for L-alanine. Residue methionine 314 participates in substrate binding.

Belongs to the alanine racemase family. It depends on pyridoxal 5'-phosphate as a cofactor.

It catalyses the reaction L-alanine = D-alanine. It participates in amino-acid biosynthesis; D-alanine biosynthesis; D-alanine from L-alanine: step 1/1. Functionally, catalyzes the interconversion of L-alanine and D-alanine. May also act on other amino acids. The polypeptide is Alanine racemase (alr) (Beutenbergia cavernae (strain ATCC BAA-8 / DSM 12333 / CCUG 43141 / JCM 11478 / NBRC 16432 / NCIMB 13614 / HKI 0122)).